A 223-amino-acid chain; its full sequence is Putative N-acetylmannosamine-6-phosphate 2-epimerase (223 aa).

The protein belongs to the NanE family.

The catalysed reaction is an N-acyl-D-glucosamine 6-phosphate = an N-acyl-D-mannosamine 6-phosphate. The protein operates within amino-sugar metabolism; N-acetylneuraminate degradation; D-fructose 6-phosphate from N-acetylneuraminate: step 3/5. Its function is as follows. Converts N-acetylmannosamine-6-phosphate (ManNAc-6-P) to N-acetylglucosamine-6-phosphate (GlcNAc-6-P). The sequence is that of Putative N-acetylmannosamine-6-phosphate 2-epimerase from Clostridioides difficile (strain 630) (Peptoclostridium difficile).